The primary structure comprises 416 residues: MELTMKKVSVIAAAVAATLAAGSAFAVDFNGYFRAGTGISGNGNADQAVNKAGTGRLGNENDNYYEFGFAEELKTGEQTWKVESMIAQGNSGANGWEDGDFNVAQFNVQAKGLLASDQEAVMWAGKRYYQRKDIHITDFYFLNTSGTGGGIENLSVGNQKLSVALVQDGDNTNSSGYIFDARLANIGLWENASLELAMAYNFATEKDSKNEVADDGVLVSAILHQGLSNGFNQTVFQYGTAGYGAQAANFWGAGSYYARGTEAFNDASGFRLLNWGVINLGENWEMGHQLAYLAGSDIGGQFGGDGANKNTYTGKSFDIDQYSVVVRPMYKWNDTMRTVFEAGYNAGEKISNGGLATEDFGNAKFTVAQAWAMGDSFWARPELRVYGTYLLDTENDKAFGDDDTEFVVGIQVEAWW.

The signal sequence occupies residues 1–26; sequence MELTMKKVSVIAAAVAATLAAGSAFA.

It belongs to the porin LamB (TC 1.B.3) family. In terms of assembly, homotrimer formed of three 18-stranded antiparallel beta-barrels, containing three independent channels.

It localises to the cell outer membrane. It catalyses the reaction beta-maltose(in) = beta-maltose(out). In terms of biological role, involved in the transport of maltose and maltodextrins. The polypeptide is Maltoporin (Vibrio cholerae serotype O1 (strain ATCC 39541 / Classical Ogawa 395 / O395)).